We begin with the raw amino-acid sequence, 239 residues long: MATPHINAEMGDFADVVLMPGDPLRANSIAETFLEDAREVNNVRGMLGFTGTYKGRRKISVMGHGMGIPSCSIYTKELITDFGVKKIIRVGSCGAVREDVKLREVVIGHGACTDSKVNRLRFKDHDFPAIADFGMVRNAVDAKALGVEARRSNIFSADLFYTPDPSMFDVMEKYGILGVEMEAAGIYGVAAEFGAKALTICTVSDHIRTHEQTIAAERQTTFNDMIKIALESVLLRDKE.

Histidine 5 serves as a coordination point for a purine D-ribonucleoside. Phosphate contacts are provided by residues glycine 21, arginine 25, arginine 44, and 89–92 (RVGS). A purine D-ribonucleoside is bound by residues 180-182 (EME) and 204-205 (SD). Residue aspartate 205 is the Proton donor of the active site.

This sequence belongs to the PNP/UDP phosphorylase family. In terms of assembly, homohexamer; trimer of homodimers.

The catalysed reaction is a purine D-ribonucleoside + phosphate = a purine nucleobase + alpha-D-ribose 1-phosphate. The enzyme catalyses a purine 2'-deoxy-D-ribonucleoside + phosphate = a purine nucleobase + 2-deoxy-alpha-D-ribose 1-phosphate. Catalyzes the reversible phosphorolytic breakdown of the N-glycosidic bond in the beta-(deoxy)ribonucleoside molecules, with the formation of the corresponding free purine bases and pentose-1-phosphate. The polypeptide is Purine nucleoside phosphorylase DeoD-type (Klebsiella pneumoniae).